A 386-amino-acid polypeptide reads, in one-letter code: Prostacyclin receptor (386 aa).

At 1–16 (MADSCRNLTYVRGSVG) the chain is on the extracellular side. 2 cysteine pairs are disulfide-bonded: Cys-5/Cys-165 and Cys-92/Cys-170. A glycan (N-linked (GlcNAc...) asparagine) is linked at Asn-7. The helical transmembrane segment at 17-38 (PATSTLMFVAGVVGNGLALGIL) threads the bilayer. Residues 39 to 51 (SARRPARPSAFAV) lie on the Cytoplasmic side of the membrane. A helical transmembrane segment spans residues 52 to 76 (LVTGLAATDLLGTSFLSPAVFVAYA). The Extracellular segment spans residues 77–94 (RNSSLLGLARGGPALCDA). Residues 95-115 (FAFAMTFFGLASMLILFAMAV) form a helical membrane-spanning segment. At 116–134 (ERCLALSHPYLYAQLDGPR) the chain is on the cytoplasmic side. A helical transmembrane segment spans residues 135–158 (CARLALPAIYAFCVLFCALPLLGL). Residues 159 to 181 (GQHQQYCPGSWCFLRMRWAQPGG) are Extracellular-facing. Residues 182–208 (AAFSLAYAGLVALLVAAIFLCNGSVTL) traverse the membrane as a helical segment. Residues 209–235 (SLCRMYRQQKRHQGSLGPRPRTGEDEV) are Cytoplasmic-facing. A helical membrane pass occupies residues 236–260 (DHLILLALMTVVMAVCSLPLTIRCF). Residues 261 to 274 (TQAVAPDSSSEMGD) lie on the Extracellular side of the membrane. The helical transmembrane segment at 275-295 (LLAFRFYAFNPILDPWVFILF) threads the bilayer. Residues 296–386 (RKAVFQRLKL…AEASVACSLC (91 aa)) are Cytoplasmic-facing. Positions 322–376 (PLSQLASGRRDPRAPSAPVGKEGSCVPLSAWGEGQVEPLPPTQQSSGSAVGTSSK) are disordered. Polar residues predominate over residues 363-376 (TQQSSGSAVGTSSK). At Cys-383 the chain carries Cysteine methyl ester. Residue Cys-383 is the site of S-farnesyl cysteine attachment. Residues 384–386 (SLC) constitute a propeptide, removed in mature form.

This sequence belongs to the G-protein coupled receptor 1 family. In terms of assembly, interacts (non-isoprenylated C-terminus) with PDZK1. Post-translationally, isoprenylation does not influence ligand binding but is required for efficient coupling to the effectors adenylyl cyclase and phospholipase C.

It is found in the cell membrane. Receptor for prostacyclin (prostaglandin I2 or PGI2). The activity of this receptor is mediated by G(s) proteins which activate adenylate cyclase. The chain is Prostacyclin receptor (PTGIR) from Homo sapiens (Human).